Reading from the N-terminus, the 912-residue chain is Serine/threonine-protein kinase D1 (912 aa).

At Tyr95 the chain carries Phosphotyrosine. A Phorbol-ester/DAG-type 1 zinc finger spans residues 146–196 (PHALFVHSYRAPAFCDHCGEMLWGLVRQGLKCEGCGLNYHKRCAFKIPNNC). Phosphoserine is present on residues Ser205, Ser208, Ser219, and Ser223. Residues 270–320 (PHTFVIHSYTRPTVCQYCKKLLKGLFRQGLQCKDCRFNCHKRCAPKVPNNC) form a Phorbol-ester/DAG-type 2 zinc finger. Residue Ser345 is modified to Phosphoserine. The tract at residues 377-402 (NDSGEMQDPDPDHEDANRTISPSTSN) is disordered. 2 positions are modified to phosphoserine; by MAPK13: Ser397 and Ser401. One can recognise a PH domain in the interval 422 to 541 (TVMKEGWMVH…WEIAIQHALM (120 aa)). Residue Tyr432 is modified to Phosphotyrosine. At Ser448 the chain carries Phosphoserine. Residue Tyr463 is modified to Phosphotyrosine; by ABL. At Ser473 the chain carries Phosphoserine. A Phosphotyrosine modification is found at Tyr502. Phosphoserine is present on Ser548. The region spanning 583–839 (IFPDEVLGSG…VDKTLSHPWL (257 aa)) is the Protein kinase domain. ATP-binding positions include 589–597 (LGSGQFGIV) and Lys612. The active-site Proton acceptor is Asp706. Ser738 bears the Phosphoserine; by PKC/PRKCD mark. A Phosphoserine; by autocatalysis and PKC/PRKCD modification is found at Ser742. Phosphotyrosine is present on Tyr749. Ser910 is modified (phosphoserine; by autocatalysis).

This sequence belongs to the protein kinase superfamily. CAMK Ser/Thr protein kinase family. PKD subfamily. As to quaternary structure, interacts (via N-terminus) with ADAP1/CENTA1. Interacts with MAPK13. Interacts with DAPK1 in an oxidative stress-regulated manner. Interacts with USP28; the interaction induces phosphorylation of USP28 and activated KRAS-mediated stabilization of ZNF304. Interacts with AKAP13 (via C-terminal domain). Mg(2+) is required as a cofactor. In terms of processing, phosphorylated at Ser-397 and Ser-401 by MAPK13 during regulation of insulin secretion in pancreatic beta cells. Phosphorylated by DAPK1. Phosphorylated at Tyr-95 and by ABL at Tyr-463, which primes the kinase in response to oxidative stress, and promotes a second step activating phosphorylation at Ser-738/Ser-742 by PKRD. Phosphorylated on Ser-910 upon S.enterica infection in macrophages.

It is found in the cytoplasm. The protein resides in the cell membrane. Its subcellular location is the golgi apparatus. The protein localises to the trans-Golgi network. The enzyme catalyses L-seryl-[protein] + ATP = O-phospho-L-seryl-[protein] + ADP + H(+). It carries out the reaction L-threonyl-[protein] + ATP = O-phospho-L-threonyl-[protein] + ADP + H(+). Its activity is regulated as follows. Activated by DAG and phorbol esters. Phorbol-ester/DAG-type domain 1 binds DAG with high affinity and appears to play the dominant role in mediating translocation to the cell membrane and trans-Golgi network. Phorbol-ester/DAG-type domain 2 binds phorbol ester with higher affinity. Autophosphorylation of Ser-742 and phosphorylation of Ser-738 by PKC relieves auto-inhibition by the PH domain. Phosphorylation on Tyr-463 by the SRC-ABL1 pathway in response to oxidative stress, is also required for activation. Activated by DAPK1 under oxidative stress. Functionally, serine/threonine-protein kinase that converts transient diacylglycerol (DAG) signals into prolonged physiological effects downstream of PKC, and is involved in the regulation of MAPK8/JNK1 and Ras signaling, Golgi membrane integrity and trafficking, cell survival through NF-kappa-B activation, cell migration, cell differentiation by mediating HDAC7 nuclear export, cell proliferation via MAPK1/3 (ERK1/2) signaling, and plays a role in cardiac hypertrophy, VEGFA-induced angiogenesis, genotoxic-induced apoptosis and flagellin-stimulated inflammatory response. Phosphorylates the epidermal growth factor receptor (EGFR) on dual threonine residues, which leads to the suppression of epidermal growth factor (EGF)-induced MAPK8/JNK1 activation and subsequent JUN phosphorylation. Phosphorylates RIN1, inducing RIN1 binding to 14-3-3 proteins YWHAB, YWHAE and YWHAZ and increased competition with RAF1 for binding to GTP-bound form of Ras proteins (NRAS, HRAS and KRAS). Acts downstream of the heterotrimeric G-protein beta/gamma-subunit complex to maintain the structural integrity of the Golgi membranes, and is required for protein transport along the secretory pathway. In the trans-Golgi network (TGN), regulates the fission of transport vesicles that are on their way to the plasma membrane. May act by activating the lipid kinase phosphatidylinositol 4-kinase beta (PI4KB) at the TGN for the local synthesis of phosphorylated inositol lipids, which induces a sequential production of DAG, phosphatidic acid (PA) and lyso-PA (LPA) that are necessary for membrane fission and generation of specific transport carriers to the cell surface. Under oxidative stress, is phosphorylated at Tyr-463 via SRC-ABL1 and contributes to cell survival by activating IKK complex and subsequent nuclear translocation and activation of NFKB1. Involved in cell migration by regulating integrin alpha-5/beta-3 recycling and promoting its recruitment in newly forming focal adhesion. In osteoblast differentiation, mediates the bone morphogenetic protein 2 (BMP2)-induced nuclear export of HDAC7, which results in the inhibition of HDAC7 transcriptional repression of RUNX2. In neurons, plays an important role in neuronal polarity by regulating the biogenesis of TGN-derived dendritic vesicles, and is involved in the maintenance of dendritic arborization and Golgi structure in hippocampal cells. May potentiate mitogenesis induced by the neuropeptide bombesin or vasopressin by mediating an increase in the duration of MAPK1/3 (ERK1/2) signaling, which leads to accumulation of immediate-early gene products including FOS that stimulate cell cycle progression. Plays an important role in the proliferative response induced by low calcium in keratinocytes, through sustained activation of MAPK1/3 (ERK1/2) pathway. Downstream of novel PKC signaling, plays a role in cardiac hypertrophy by phosphorylating HDAC5, which in turn triggers XPO1/CRM1-dependent nuclear export of HDAC5, MEF2A transcriptional activation and induction of downstream target genes that promote myocyte hypertrophy and pathological cardiac remodeling. Mediates cardiac troponin I (TNNI3) phosphorylation at the PKA sites, which results in reduced myofilament calcium sensitivity, and accelerated crossbridge cycling kinetics. The PRKD1-HDAC5 pathway is also involved in angiogenesis by mediating VEGFA-induced specific subset of gene expression, cell migration, and tube formation. In response to VEGFA, is necessary and required for HDAC7 phosphorylation which induces HDAC7 nuclear export and endothelial cell proliferation and migration. During apoptosis induced by cytarabine and other genotoxic agents, PRKD1 is cleaved by caspase-3 at Asp-378, resulting in activation of its kinase function and increased sensitivity of cells to the cytotoxic effects of genotoxic agents. In epithelial cells, is required for transducing flagellin-stimulated inflammatory responses by binding and phosphorylating TLR5, which contributes to MAPK14/p38 activation and production of inflammatory cytokines. Acts as an activator of NLRP3 inflammasome assembly by mediating phosphorylation of NLRP3. May play a role in inflammatory response by mediating activation of NF-kappa-B. May be involved in pain transmission by directly modulating TRPV1 receptor. Plays a role in activated KRAS-mediated stabilization of ZNF304 in colorectal cancer (CRC) cells. Regulates nuclear translocation of transcription factor TFEB in macrophages upon live S.enterica infection. The protein is Serine/threonine-protein kinase D1 (PRKD1) of Homo sapiens (Human).